Consider the following 278-residue polypeptide: Complement C1q tumor necrosis factor-related protein 6 (278 aa).

An N-terminal signal peptide occupies residues 1-46 (MQWLRVRESPGEATGHRVTMGTAALGPVWAALLLFLLMCEIPMVEL). Asn91 carries an N-linked (GlcNAc...) asparagine glycan. The region spanning 97–138 (GDKGDPGPMGLPGYMGREGPQGEPGPQGSKGDKGEMGSPGAP) is the Collagen-like domain. The interval 99-135 (KGDPGPMGLPGYMGREGPQGEPGPQGSKGDKGEMGSP) is disordered. The C1q domain occupies 139–259 (CQKRFFAFSV…KRQRENAIYS (121 aa)).

The protein resides in the secreted. This chain is Complement C1q tumor necrosis factor-related protein 6 (C1QTNF6), found in Homo sapiens (Human).